Consider the following 436-residue polypeptide: Prenyltransferase nscD (436 aa).

This sequence belongs to the tryptophan dimethylallyltransferase family.

It functions in the pathway secondary metabolite biosynthesis. Functionally, prenyltransferase; part of the gene cluster that mediates the biosynthesis of neosartoricin B, a prenylated anthracenone that probably exhibits T-cell antiproliferative activity, suggestive of a physiological role as an immunosuppressive agent. The non-reducing polyketide synthase nscA probably synthesizes and cyclizes the decaketide backbone. The hydrolase nscB then mediates the product release through hydrolysis followed by spontaneous decarboxylation. The prenyltransferase nscD catalyzes the addition of the dimethylallyl group to the aromatic C5. The FAD-dependent monooxygenase nscC is then responsible for the stereospecific hydroxylation at C2. Neosartoricin B can be converted into two additional compounds neosartoricins C and D. Neosartoricin C is a spirocyclic compound that is cyclized through the attack of C3 hydroxyl on C14, followed by dehydration. On the other hand, neosartoricin D is a further cyclized compound in which attack of C2 on C14 in neosartoricin C results in the formation of the acetal-containing dioxabicyclo-octanone ring. Both of these compounds are novel and possibly represent related metabolites of the gene cluster. This is Prenyltransferase nscD from Arthroderma gypseum (strain ATCC MYA-4604 / CBS 118893) (Microsporum gypseum).